The chain runs to 303 residues: Glycine--tRNA ligase alpha subunit (303 aa).

The protein belongs to the class-II aminoacyl-tRNA synthetase family. In terms of assembly, tetramer of two alpha and two beta subunits.

It is found in the cytoplasm. The enzyme catalyses tRNA(Gly) + glycine + ATP = glycyl-tRNA(Gly) + AMP + diphosphate. The protein is Glycine--tRNA ligase alpha subunit of Klebsiella pneumoniae subsp. pneumoniae (strain ATCC 700721 / MGH 78578).